The following is a 441-amino-acid chain: Ribosomal protein uS12 methylthiotransferase RimO (441 aa).

Residues 7-117 (PKISFVSLGC…VLDAVHRAKP (111 aa)) enclose the MTTase N-terminal domain. Positions 16, 52, 81, 148, 152, and 155 each coordinate [4Fe-4S] cluster. One can recognise a Radical SAM core domain in the interval 134–371 (LTPRHYAYLK…MARQQAISAR (238 aa)). The region spanning 374–440 (KRKVGTRQQI…AYDLHGTVAG (67 aa)) is the TRAM domain.

This sequence belongs to the methylthiotransferase family. RimO subfamily. The cofactor is [4Fe-4S] cluster.

It is found in the cytoplasm. The enzyme catalyses L-aspartate(89)-[ribosomal protein uS12]-hydrogen + (sulfur carrier)-SH + AH2 + 2 S-adenosyl-L-methionine = 3-methylsulfanyl-L-aspartate(89)-[ribosomal protein uS12]-hydrogen + (sulfur carrier)-H + 5'-deoxyadenosine + L-methionine + A + S-adenosyl-L-homocysteine + 2 H(+). In terms of biological role, catalyzes the methylthiolation of an aspartic acid residue of ribosomal protein uS12. This Rhodopseudomonas palustris (strain HaA2) protein is Ribosomal protein uS12 methylthiotransferase RimO.